Here is a 229-residue protein sequence, read N- to C-terminus: MSNQGEYPEDNRVGKHEPHDLSLTRRDLIKVSAATAATAVVYPHSTLAASVPAATPAPEIMPLTLKVNGKTEQLEVDTRTTLLDTLRENLHLIGTKKGCDHGQCGACTVLVNGRRLNACLTLAVMHQGAEITTIEGLGSPDNLHPMQAAFIKHDGFQCGYCTSGQICSSVAVLKEIQDGIPSHVTVDLVSAPETTADEIRERMSGNICRCGAYANILAAIEDAAGEIKS.

Positions 1–21 (MSNQGEYPEDNRVGKHEPHDL) are disordered. Positions 1–53 (MSNQGEYPEDNRVGKHEPHDLSLTRRDLIKVSAATAATAVVYPHSTLAASVPA) form a signal peptide, tat-type signal. Basic and acidic residues predominate over residues 9–21 (EDNRVGKHEPHDL). Positions 61–137 (MPLTLKVNGK…GAEITTIEGL (77 aa)) constitute a 2Fe-2S ferredoxin-type domain. [2Fe-2S] cluster-binding residues include cysteine 99, cysteine 104, glycine 105, cysteine 107, cysteine 119, cysteine 158, cysteine 161, cysteine 208, and cysteine 210.

Heterotrimer composed of PaoA, PaoB and PaoC. Requires [2Fe-2S] cluster as cofactor. Exported by the Tat system. The position of the signal peptide cleavage has not been experimentally proven.

Its subcellular location is the periplasm. It carries out the reaction an aldehyde + A + H2O = a carboxylate + AH2 + H(+). The complex requires PaoD for activity. Functionally, oxidizes aldehydes to the corresponding carboxylic acids with a preference for aromatic aldehydes. It might play a role in the detoxification of aldehydes to avoid cell damage. The chain is Aldehyde oxidoreductase iron-sulfur-binding subunit PaoA from Escherichia coli (strain K12).